We begin with the raw amino-acid sequence, 286 residues long: Secretory carrier-associated membrane protein 2 (286 aa).

Composition is skewed to basic and acidic residues over residues 1–10 (MAGRYDRNPF) and 54–63 (STKDMKKKEK). The interval 1–63 (MAGRYDRNPF…STKDMKKKEK (63 aa)) is disordered. Topologically, residues 1–126 (MAGRYDRNPF…LQRMQYLAFS (126 aa)) are cytoplasmic. The stretch at 52 to 89 (LDSTKDMKKKEKELQAKEAELNKRESELRRREEAASRA) forms a coiled coil. The next 4 membrane-spanning stretches (helical) occupy residues 127-147 (SLLG…AAWI), 152-172 (VMIW…AYVL), 189-209 (FGWF…SAVA), and 237-257 (IFYF…VVVI). The Cytoplasmic portion of the chain corresponds to 258–286 (QQVYMYFRGSGKAAEMKREAARGAMRSAF).

Belongs to the SCAMP family.

It is found in the cell membrane. Its subcellular location is the cytoplasmic vesicle. It localises to the secretory vesicle membrane. Functionally, probably involved in membrane trafficking. The sequence is that of Secretory carrier-associated membrane protein 2 (SCAMP2) from Oryza sativa subsp. japonica (Rice).